Here is a 293-residue protein sequence, read N- to C-terminus: Rhomboid-like protease 1 (293 aa).

Residues 18–40 (EHTPLYNAETGSRDSDSTSSGGA) are disordered. The next 6 membrane-spanning stretches (helical) occupy residues 62–82 (VVLAISIVDWIFYIVTVCLDT), 112–132 (LLLPVFLHANFFHVFFNVFFQ), 148–168 (FTGLYFASAIYGNLLSATAFF), 174–194 (VGASTAGFGLIGIQICEMALT), 217–237 (LLMFTLNGGSIDQMGHLGGLL), and 262–282 (AAAIGILLALPAACFPILYAV). The active-site Nucleophile is Ser-177. The active site involves His-232.

This sequence belongs to the peptidase S54 family.

Its subcellular location is the cytoplasmic vesicle. It is found in the secretory vesicle. It localises to the microneme membrane. The enzyme catalyses Cleaves type-1 transmembrane domains using a catalytic dyad composed of serine and histidine that are contributed by different transmembrane domains.. In terms of biological role, serine protease involved in intramembrane proteolysis and the subsequent release of polypeptides from their membrane anchors. Has no detectable activity towards MIC2. This chain is Rhomboid-like protease 1 (ROM1), found in Toxoplasma gondii.